The following is a 319-amino-acid chain: Beta-ketoacyl-[acyl-carrier-protein] synthase III (319 aa).

Active-site residues include Cys113 and His246. The tract at residues 247 to 251 (QANIR) is ACP-binding. Residue Asn276 is part of the active site.

It belongs to the thiolase-like superfamily. FabH family. Homodimer.

The protein localises to the cytoplasm. The enzyme catalyses malonyl-[ACP] + acetyl-CoA + H(+) = 3-oxobutanoyl-[ACP] + CO2 + CoA. It functions in the pathway lipid metabolism; fatty acid biosynthesis. Functionally, catalyzes the condensation reaction of fatty acid synthesis by the addition to an acyl acceptor of two carbons from malonyl-ACP. Catalyzes the first condensation reaction which initiates fatty acid synthesis and may therefore play a role in governing the total rate of fatty acid production. Possesses both acetoacetyl-ACP synthase and acetyl transacylase activities. Its substrate specificity determines the biosynthesis of branched-chain and/or straight-chain of fatty acids. The polypeptide is Beta-ketoacyl-[acyl-carrier-protein] synthase III (Ehrlichia chaffeensis (strain ATCC CRL-10679 / Arkansas)).